Here is a 20-residue protein sequence, read N- to C-terminus: Equinatoxin-3 (20 aa).

A plays an important role in the hemolytic activity region spans residues 3-12; that stretch reads AVAGAIIKGA. The segment at 11 to 20 is N-terminal region; sequence GAALTFNVLQ.

This sequence belongs to the actinoporin family. Sea anemone subfamily. As to quaternary structure, octamer or nonamer in membranes. Monomer in the soluble state.

It is found in the secreted. It localises to the nematocyst. The protein localises to the target cell membrane. Pore-forming protein that forms cations-selective hydrophilic pores of around 1 nm and causes cardiac stimulation and cytolysis. Pore formation is a multi-step process that involves specific recognition of membrane sphingomyelin (but neither cholesterol nor phosphatidylcholine) using aromatic rich region and adjacent phosphocholine (POC) binding site, firm binding to the membrane (mainly driven by hydrophobic interactions) accompanied by the transfer of the N-terminal region to the lipid-water interface and finally pore formation after oligomerization of monomers. Cytolytic effects include red blood cells hemolysis, platelet aggregation and lysis, cytotoxic and cytostatic effects on fibroblasts. Lethality in mammals has been ascribed to severe vasospasm of coronary vessels, cardiac arrhythmia, and inotropic effects. In Actinia equina (Beadlet anemone), this protein is Equinatoxin-3.